Consider the following 297-residue polypeptide: Aspartate carbamoyltransferase catalytic subunit (297 aa).

2 residues coordinate carbamoyl phosphate: Arg-49 and Thr-50. L-aspartate is bound at residue Lys-77. 3 residues coordinate carbamoyl phosphate: Arg-99, His-129, and Gln-132. Residues Arg-162 and Arg-215 each coordinate L-aspartate. Residues Gly-256 and Pro-257 each coordinate carbamoyl phosphate.

This sequence belongs to the aspartate/ornithine carbamoyltransferase superfamily. ATCase family. Heterododecamer (2C3:3R2) of six catalytic PyrB chains organized as two trimers (C3), and six regulatory PyrI chains organized as three dimers (R2).

It catalyses the reaction carbamoyl phosphate + L-aspartate = N-carbamoyl-L-aspartate + phosphate + H(+). Its pathway is pyrimidine metabolism; UMP biosynthesis via de novo pathway; (S)-dihydroorotate from bicarbonate: step 2/3. In terms of biological role, catalyzes the condensation of carbamoyl phosphate and aspartate to form carbamoyl aspartate and inorganic phosphate, the committed step in the de novo pyrimidine nucleotide biosynthesis pathway. The chain is Aspartate carbamoyltransferase catalytic subunit from Legionella pneumophila subsp. pneumophila (strain Philadelphia 1 / ATCC 33152 / DSM 7513).